Here is a 317-residue protein sequence, read N- to C-terminus: Carbonic anhydrase 5B, mitochondrial (317 aa).

The transit peptide at 1–33 directs the protein to the mitochondrion; the sequence is MAVMNHLRVILQVSSSTLPWRRCWVPRLVPRRS. The Alpha-carbonic anhydrase domain maps to 37 to 296; sequence YTCTYRTRNR…LMNRTVRSSF (260 aa). Residues H130, H132, and H155 each contribute to the Zn(2+) site. Position 235–236 (235–236) interacts with substrate; that stretch reads TT.

Belongs to the alpha-carbonic anhydrase family. Zn(2+) serves as cofactor. In terms of tissue distribution, expressed in the heart, liver, lung, kidney, testis, and skeletal muscle (at protein level).

The protein resides in the mitochondrion. The catalysed reaction is hydrogencarbonate + H(+) = CO2 + H2O. Mitochondrial carbonic anhydrase that catalyzes the reversible conversion of carbon dioxide to bicarbonate/HCO3. This chain is Carbonic anhydrase 5B, mitochondrial (Ca5b), found in Mus musculus (Mouse).